Reading from the N-terminus, the 25-residue chain is C-type natriuretic peptide (25 aa).

A disulfide bridge connects residues Cys9 and Cys25.

Venom gland.

The protein resides in the secreted. Its function is as follows. Snake venom natriuretic peptide that has a vasorelaxant activity in rat aortic strips and a diuretic potency in anesthetized rats. May act by activating natriuretic receptors (NPR1 and/or NPR2). This is C-type natriuretic peptide from Crotalus atrox (Western diamondback rattlesnake).